The sequence spans 265 residues: MKVAIVHNSEEKSKQVTKQLTTLLEQNQIQIDNRQPELVISVGGDGTLLSAFHRFNHLLNEVSFLGVHTGHLGFYTDWRDYELKELVESLCIHREKSTSYPLLDVRIRFRDGKPDKHFLALNESTIKRGNRTMVGDVFIKDELFERFRGDGLSISTPTGSTAYNKSIGGAVLHPSINAFQLTEIASLNNRVFRTLGSPIVIAHTEWLEIKLQESDDYFVTVDQLDIYQENIASVCYRIADERIHFASYRHMHFWHRVKDAFIGED.

The Proton acceptor role is filled by Asp-45. Residues 45–46 (DG), 122–123 (NE), Arg-148, Asp-150, 161–166 (TAYNKS), Ala-185, and Gln-223 each bind NAD(+).

This sequence belongs to the NAD kinase family. A divalent metal cation is required as a cofactor.

The protein localises to the cytoplasm. The catalysed reaction is NAD(+) + ATP = ADP + NADP(+) + H(+). Its function is as follows. Involved in the regulation of the intracellular balance of NAD and NADP, and is a key enzyme in the biosynthesis of NADP. Catalyzes specifically the phosphorylation on 2'-hydroxyl of the adenosine moiety of NAD to yield NADP. The chain is NAD kinase from Enterococcus faecalis (strain ATCC 700802 / V583).